A 42-amino-acid polypeptide reads, in one-letter code: Crotamine Ile-19 (42 aa).

Cystine bridges form between Cys4/Cys36, Cys11/Cys30, and Cys18/Cys37.

This sequence belongs to the crotamine-myotoxin family. Monomer. As to expression, expressed by the venom gland.

It localises to the secreted. Its function is as follows. Cationic peptide that possesses multiple functions. It acts as a cell-penetrating peptide (CPP), and as a potent voltage-gated potassium channel (Kv) inhibitor, it induces severe muscle necrosis by a non-enzymatic mechanism and exhibits antimicrobial activities. It also elicits a short-lasting hyperextension of the hind limb. It does not cause observable tissue damage (whereas the whole venom causes severe myonecrosis accompanied by edema and hemorrhage). The polypeptide is Crotamine Ile-19 (Crotalus durissus ruruima (South American rattlesnake)).